We begin with the raw amino-acid sequence, 699 residues long: Epithelial sodium channel subunit alpha (699 aa).

A disordered region spans residues M1 to E71. Over M1 to A110 the chain is Cytoplasmic. The helical transmembrane segment at F111–F131 threads the bilayer. The Extracellular portion of the chain corresponds to E132–S589. Intrachain disulfides connect C158–C332, C256–C263, C309–C316, C421–C506, C443–C483, C443–C502, C447–C498, C456–C483, C456–C506, and C458–C472. Residues R200–S270 are gating release of inhibition by proteolysis (GRIP); protease-sensitive region that is responsible for the proteolytic activation of the channel. Positions L211–V244 are disordered. A compositionally biased stretch (low complexity) spans A227 to R238. A helical transmembrane segment spans residues V590–M610. Over L611–L699 the chain is Cytoplasmic. The segment at A637–L699 is disordered. Residues P656 to T667 are compositionally biased toward low complexity. The PY motif; recruits WW domain-containing proteins and is thereby required for ubiquitination and inhibition of the channel by NEDD4 and NEDD4L motif lies at P669–Y673.

The protein belongs to the amiloride-sensitive sodium channel (TC 1.A.6) family. SCNN1A subfamily. Heterotrimer; containing an alpha/SCNN1A, a beta/SCNN1B and a gamma/SCNN1G subunit. Interacts with WWP1 (via WW domains). Interacts with WWP2 (via WW domains); inhibits the channel. Interacts with BPIFA1; the interaction is indirect via SCNN1B and inhibits the proteolytic processing of SCNN1A and SCNN1G and the activation of ENaC. Interacts with the full-length immature form of PCSK9 (pro-PCSK9). Ubiquitinated. Can be ubiquitinated at multiple sites and undergo monoubiquitination and polyubiquitination. Ubiquitination by NEDD4 or NEDD4L inhibits the ENaC channel through endocytosis, intracellular retention and degradation of its individual subunits. Post-translationally, ENaC is activated through the proteolytic maturation of its subunits. Furin cleaves the SCNN1A subunit, which results in a stepwise increase in the open probability of the channel due to the release of an inhibitory tract. BPIFA1, which is recruited by the SCNN1B subunit, prevents the proteolytic activation of ENaC. In terms of processing, N-glycosylated. In terms of tissue distribution, expressed in kidney (at protein level). Expressed in lung (at protein level). Expressed in the epididymis (at protein level). In the caput and corpus regions of the epididymis, expressed uniformly on the luminal and basal surfaces of the ducts and in the sperm in the duct lumen. Also expressed in distal colon and, at low levels, in liver.

The protein resides in the apical cell membrane. Its subcellular location is the cell projection. It localises to the cilium. The protein localises to the cytoplasmic granule. It is found in the cytoplasm. The protein resides in the cytoplasmic vesicle. Its subcellular location is the secretory vesicle. It localises to the acrosome. The protein localises to the flagellum. The enzyme catalyses Na(+)(in) = Na(+)(out). With respect to regulation, originally identified and characterized by its inhibition by the diuretic drug amiloride. In terms of biological role, this is one of the three pore-forming subunits of the heterotrimeric epithelial sodium channel (ENaC), a critical regulator of sodium balance and fluid homeostasis. ENaC operates in epithelial tissues, where it mediates the electrodiffusion of sodium ions from extracellular fluid through the apical membrane of cells, with water following osmotically. It plays a key role in maintaining sodium homeostasis through electrogenic sodium reabsorption in the kidneys. Additionally, ENaC is essential for airway surface liquid homeostasis, which is crucial for proper mucus clearance. The sequence is that of Epithelial sodium channel subunit alpha from Mus musculus (Mouse).